The chain runs to 145 residues: D-aminoacyl-tRNA deacylase (145 aa).

The Gly-cisPro motif, important for rejection of L-amino acids signature appears at 137–138 (GP).

The protein belongs to the DTD family. Homodimer.

It localises to the cytoplasm. It catalyses the reaction glycyl-tRNA(Ala) + H2O = tRNA(Ala) + glycine + H(+). The catalysed reaction is a D-aminoacyl-tRNA + H2O = a tRNA + a D-alpha-amino acid + H(+). In terms of biological role, an aminoacyl-tRNA editing enzyme that deacylates mischarged D-aminoacyl-tRNAs. Also deacylates mischarged glycyl-tRNA(Ala), protecting cells against glycine mischarging by AlaRS. Acts via tRNA-based rather than protein-based catalysis; rejects L-amino acids rather than detecting D-amino acids in the active site. By recycling D-aminoacyl-tRNA to D-amino acids and free tRNA molecules, this enzyme counteracts the toxicity associated with the formation of D-aminoacyl-tRNA entities in vivo and helps enforce protein L-homochirality. The protein is D-aminoacyl-tRNA deacylase of Pseudoalteromonas atlantica (strain T6c / ATCC BAA-1087).